We begin with the raw amino-acid sequence, 285 residues long: Probable endonuclease 4 (285 aa).

Zn(2+) is bound by residues H69, H109, E145, D179, H182, H216, D229, H231, and E261.

It belongs to the AP endonuclease 2 family. Zn(2+) is required as a cofactor.

The enzyme catalyses Endonucleolytic cleavage to 5'-phosphooligonucleotide end-products.. Endonuclease IV plays a role in DNA repair. It cleaves phosphodiester bonds at apurinic or apyrimidinic (AP) sites, generating a 3'-hydroxyl group and a 5'-terminal sugar phosphate. The protein is Probable endonuclease 4 of Citrobacter koseri (strain ATCC BAA-895 / CDC 4225-83 / SGSC4696).